Reading from the N-terminus, the 239-residue chain is Ribonuclease 3 (239 aa).

An RNase III domain is found at 12-137 (RAKLEGLIGH…LIAAIYLDGG (126 aa)). Position 50 (glutamate 50) interacts with Mg(2+). Aspartate 54 is an active-site residue. Mg(2+) is bound by residues aspartate 123 and glutamate 126. Glutamate 126 is an active-site residue. Residues 162-231 (DAKTELQEWS…ATKMLEREGI (70 aa)) form the DRBM domain.

It belongs to the ribonuclease III family. As to quaternary structure, homodimer. Mg(2+) serves as cofactor.

It is found in the cytoplasm. It carries out the reaction Endonucleolytic cleavage to 5'-phosphomonoester.. Functionally, digests double-stranded RNA. Involved in the processing of primary rRNA transcript to yield the immediate precursors to the large and small rRNAs (23S and 16S). Processes some mRNAs, and tRNAs when they are encoded in the rRNA operon. Processes pre-crRNA and tracrRNA of type II CRISPR loci if present in the organism. The sequence is that of Ribonuclease 3 from Rhizobium leguminosarum bv. trifolii (strain WSM2304).